We begin with the raw amino-acid sequence, 164 residues long: MTQITFKNNPIHLAGSEVSEGQHAPDFKVLDNDLNEVSLENYKGQKKLISVVPSIDTGVCDQQTRKFNEEAAQEDGVVLTISADLPFAQKRWCASNGLDNVITLSDHKDLSFGQQYGVVMEELRLLARSVFVLDSNDKVVYKELVSEGTDFPNFDAALEAYRNI.

A Thioredoxin domain is found at 18–163 (VSEGQHAPDF…FDAALEAYRN (146 aa)). The active-site Cysteine sulfenic acid (-SOH) intermediate is the C60. C60 and C93 form a disulfide bridge.

This sequence belongs to the peroxiredoxin family. Tpx subfamily. As to quaternary structure, homodimer.

It catalyses the reaction a hydroperoxide + [thioredoxin]-dithiol = an alcohol + [thioredoxin]-disulfide + H2O. Functionally, thiol-specific peroxidase that catalyzes the reduction of hydrogen peroxide and organic hydroperoxides to water and alcohols, respectively. Plays a role in cell protection against oxidative stress by detoxifying peroxides. The chain is Thiol peroxidase from Staphylococcus haemolyticus (strain JCSC1435).